Here is a 1854-residue protein sequence, read N- to C-terminus: Protein virilizer (1854 aa).

Ser-186 is subject to Phosphoserine. Basic and acidic residues-rich tracts occupy residues 202 to 214 (YHQH…QREM) and 236 to 259 (THSE…DWSR). Disordered stretches follow at residues 202–361 (YHQH…EIIG), 777–821 (NPEE…GKPV), 1570–1589 (TSTE…ASSC), 1720–1788 (VRGR…NRGS), and 1804–1854 (IGSP…SYLR). Phosphoserine is present on residues Ser-258, Ser-260, and Ser-276. Over residues 275 to 285 (RSRSVVDEHKW) the composition is skewed to basic and acidic residues. Thr-288 carries the post-translational modification Phosphothreonine. The residue at position 295 (Ser-295) is a Phosphoserine. Position 297 is a phosphothreonine (Thr-297). A phosphoserine mark is found at Ser-301 and Ser-312. Composition is skewed to basic and acidic residues over residues 325–343 (HSSE…EDRS) and 777–796 (NPEE…KAME). Residues 779-808 (EEKEEKAEKSDAEDKAMEVENEAVEAGGEK) adopt a coiled-coil conformation. Low complexity-rich tracts occupy residues 1738–1748 (SRPPNTSRPPS) and 1816–1838 (SYRS…PHYS).

This sequence belongs to the vir family. Component of the WMM complex, a N6-methyltransferase complex composed of a catalytic subcomplex, named MAC, and of an associated subcomplex, named MACOM. The MAC subcomplex is composed of Ime4/Mettl3 and Mettl14. The MACOM subcomplex is composed of fl(2)d, Flacc/Xio, Hakai, vir, and, in some cases of nito. Part of a complex containing fl(2)d, Sxl and vir.

It localises to the nucleus. Its function is as follows. Associated component of the WMM complex, a complex that mediates N6-methyladenosine (m6A) methylation of mRNAs, a modification that plays a role in the efficiency of mRNA splicing and is required for sex determination. Required for sex determination and dosage compensation via Sxl alternative splicing: m6A methylation acts as a key regulator of Sxl pre-mRNA and promotes female-specific alternative splicing of Sxl, which determines female physiognomy. M6A methylation is also required for neuronal functions. Required for proper inclusion of regulated exons in Ubx transcripts, leading to isoforms Ia/b and IIa/b. This is Protein virilizer from Drosophila melanogaster (Fruit fly).